Consider the following 340-residue polypeptide: Agmatinase, mitochondrial (340 aa).

Mn(2+)-binding residues include H150, D173, H175, D177, D264, and D266.

This sequence belongs to the arginase family. Agmatinase subfamily. It depends on Mn(2+) as a cofactor.

It is found in the mitochondrion. The catalysed reaction is agmatine + H2O = urea + putrescine. It functions in the pathway amine and polyamine biosynthesis; putrescine biosynthesis via agmatine pathway; putrescine from agmatine: step 1/1. The protein is Agmatinase, mitochondrial (AGMAT) of Gallus gallus (Chicken).